Consider the following 451-residue polypeptide: BAHD acyltransferase At3g29680 (451 aa).

Active-site proton acceptor residues include histidine 161 and aspartate 393.

The protein belongs to the plant acyltransferase family.

This Arabidopsis thaliana (Mouse-ear cress) protein is BAHD acyltransferase At3g29680.